Reading from the N-terminus, the 392-residue chain is Adenosine 3'-phospho 5'-phosphosulfate transporter 2 (392 aa).

The disordered stretch occupies residues 11–35 (NINGSASGQQAPTSNSPTLTRKSSS). The next 10 helical transmembrane spans lie at 62–82 (CAGV…IFTV), 87–107 (PFGW…GLVE), 136–156 (LVLA…LGYL), 159–179 (PTQV…SILI), 185–205 (GPLD…FTLA), 212–232 (NFNL…AAIG), 249–269 (VVFY…LVTG), 286–306 (FGYG…VLAL), 314–334 (IAAT…FVLF), and 338–358 (FTVQ…LNVY).

This sequence belongs to the nucleotide-sugar transporter family. SLC35B subfamily.

Its subcellular location is the golgi apparatus membrane. In terms of biological role, mediates the transport of adenosine 3'-phospho 5'-phosphosulfate (PAPS), from cytosol into Golgi. PAPS is a universal sulfuryl donor for sulfation events that take place in the Golgi. Essential for viability. Involved in glycosaminoglycan synthesis and the subsequent signaling. May be involved in hh and dpp signaling by controlling the sulfation of heparan sulfate (HS). The polypeptide is Adenosine 3'-phospho 5'-phosphosulfate transporter 2 (Drosophila pseudoobscura pseudoobscura (Fruit fly)).